We begin with the raw amino-acid sequence, 449 residues long: UDP-N-acetylglucosamine 1-carboxyvinyltransferase (449 aa).

51-52 provides a ligand contact to phosphoenolpyruvate; the sequence is KN. Arg121 provides a ligand contact to UDP-N-acetyl-alpha-D-glucosamine. The Proton donor role is filled by Cys145. Cys145 is subject to 2-(S-cysteinyl)pyruvic acid O-phosphothioketal. Residues 150-154, Asp333, and Ile355 each bind UDP-N-acetyl-alpha-D-glucosamine; that span reads RPVDQ.

Belongs to the EPSP synthase family. MurA subfamily.

The protein resides in the cytoplasm. It carries out the reaction phosphoenolpyruvate + UDP-N-acetyl-alpha-D-glucosamine = UDP-N-acetyl-3-O-(1-carboxyvinyl)-alpha-D-glucosamine + phosphate. The protein operates within cell wall biogenesis; peptidoglycan biosynthesis. Functionally, cell wall formation. Adds enolpyruvyl to UDP-N-acetylglucosamine. In Burkholderia mallei (strain ATCC 23344), this protein is UDP-N-acetylglucosamine 1-carboxyvinyltransferase.